We begin with the raw amino-acid sequence, 627 residues long: (-)-alpha-pinene synthase 2, chloroplastic (627 aa).

A chloroplast-targeting transit peptide spans 1 to 36 (MALVSIAPLASKSCLHKSLSSSAHELKTICRTIPTL). Positions 378, 382, and 530 each coordinate Mg(2+). The DDXXD motif motif lies at 378–382 (DDMYD).

This sequence belongs to the terpene synthase family. Tpsd subfamily. Mg(2+) is required as a cofactor. Mn(2+) serves as cofactor.

It localises to the plastid. The protein localises to the chloroplast. It catalyses the reaction (2E)-geranyl diphosphate = (1S,5S)-beta-pinene + diphosphate. The enzyme catalyses (2E)-geranyl diphosphate = (1S,5S)-alpha-pinene + diphosphate. The protein operates within terpene metabolism; oleoresin biosynthesis. Its function is as follows. Terpene synthase (TPS) involved in the biosynthesis of monoterpene natural products included in conifer oleoresin secretions and volatile emissions; these compounds contribute to biotic and abiotic stress defense against herbivores and pathogens. Catalyzes the conversion of (2E)-geranyl diphosphate (GPP) to (1S,5S)-beta-pinene. The chain is (-)-alpha-pinene synthase 2, chloroplastic from Picea glauca (White spruce).